Reading from the N-terminus, the 342-residue chain is Phenylalanine--tRNA ligase alpha subunit (342 aa).

E255 provides a ligand contact to Mg(2+).

It belongs to the class-II aminoacyl-tRNA synthetase family. Phe-tRNA synthetase alpha subunit type 1 subfamily. As to quaternary structure, tetramer of two alpha and two beta subunits. It depends on Mg(2+) as a cofactor.

The protein resides in the cytoplasm. It carries out the reaction tRNA(Phe) + L-phenylalanine + ATP = L-phenylalanyl-tRNA(Phe) + AMP + diphosphate + H(+). The protein is Phenylalanine--tRNA ligase alpha subunit of Pelotomaculum thermopropionicum (strain DSM 13744 / JCM 10971 / SI).